A 291-amino-acid chain; its full sequence is Pyridoxal 5'-phosphate synthase subunit PdxS (291 aa).

D-ribose 5-phosphate is bound at residue Asp-23. Residue Lys-80 is the Schiff-base intermediate with D-ribose 5-phosphate of the active site. A D-ribose 5-phosphate-binding site is contributed by Gly-152. Arg-164 contributes to the D-glyceraldehyde 3-phosphate binding site. Residues Gly-213 and Gly-234–Ser-235 each bind D-ribose 5-phosphate.

Belongs to the PdxS/SNZ family. In the presence of PdxT, forms a dodecamer of heterodimers.

It carries out the reaction aldehydo-D-ribose 5-phosphate + D-glyceraldehyde 3-phosphate + L-glutamine = pyridoxal 5'-phosphate + L-glutamate + phosphate + 3 H2O + H(+). It functions in the pathway cofactor biosynthesis; pyridoxal 5'-phosphate biosynthesis. Catalyzes the formation of pyridoxal 5'-phosphate from ribose 5-phosphate (RBP), glyceraldehyde 3-phosphate (G3P) and ammonia. The ammonia is provided by the PdxT subunit. Can also use ribulose 5-phosphate and dihydroxyacetone phosphate as substrates, resulting from enzyme-catalyzed isomerization of RBP and G3P, respectively. The sequence is that of Pyridoxal 5'-phosphate synthase subunit PdxS from Methanocorpusculum labreanum (strain ATCC 43576 / DSM 4855 / Z).